The chain runs to 163 residues: Ribonuclease H (163 aa).

An RNase H type-1 domain is found at 1–142; that stretch reads MRKQVAIFTD…CDELARTAAC (142 aa). Residues aspartate 10, glutamate 48, aspartate 70, and aspartate 134 each contribute to the Mg(2+) site.

It belongs to the RNase H family. In terms of assembly, monomer. Requires Mg(2+) as cofactor.

It localises to the cytoplasm. The enzyme catalyses Endonucleolytic cleavage to 5'-phosphomonoester.. Its function is as follows. Endonuclease that specifically degrades the RNA of RNA-DNA hybrids. The sequence is that of Ribonuclease H from Sodalis glossinidius (strain morsitans).